Reading from the N-terminus, the 115-residue chain is Large ribosomal subunit protein bL20 (115 aa).

It belongs to the bacterial ribosomal protein bL20 family.

Its function is as follows. Binds directly to 23S ribosomal RNA and is necessary for the in vitro assembly process of the 50S ribosomal subunit. It is not involved in the protein synthesizing functions of that subunit. In Borrelia turicatae (strain 91E135), this protein is Large ribosomal subunit protein bL20.